The sequence spans 339 residues: Small ribosomal subunit biogenesis GTPase RsgA (339 aa).

Positions 111–271 (MRGLLKPVAA…LIDSPGIREF (161 aa)) constitute a CP-type G domain. Residues 159–162 (NKAD) and 213–221 (GQSGVGKSS) each bind GTP. Residues Cys-295, Cys-300, His-302, and Cys-308 each contribute to the Zn(2+) site.

It belongs to the TRAFAC class YlqF/YawG GTPase family. RsgA subfamily. In terms of assembly, monomer. Associates with 30S ribosomal subunit, binds 16S rRNA. The cofactor is Zn(2+).

It localises to the cytoplasm. In terms of biological role, one of several proteins that assist in the late maturation steps of the functional core of the 30S ribosomal subunit. Helps release RbfA from mature subunits. May play a role in the assembly of ribosomal proteins into the subunit. Circularly permuted GTPase that catalyzes slow GTP hydrolysis, GTPase activity is stimulated by the 30S ribosomal subunit. This Pseudomonas aeruginosa (strain UCBPP-PA14) protein is Small ribosomal subunit biogenesis GTPase RsgA.